Reading from the N-terminus, the 117-residue chain is Large ribosomal subunit protein bL20 (117 aa).

Belongs to the bacterial ribosomal protein bL20 family.

In terms of biological role, binds directly to 23S ribosomal RNA and is necessary for the in vitro assembly process of the 50S ribosomal subunit. It is not involved in the protein synthesizing functions of that subunit. This is Large ribosomal subunit protein bL20 from Rickettsia akari (strain Hartford).